Reading from the N-terminus, the 417-residue chain is GTP-binding protein YPT11 (417 aa).

The tract at residues 1 to 34 (MSQRKRYSLNVVTSPSIPSPTPSAPIRTNESNWE) is disordered. GTP-binding positions include 97–104 (GDANVGKT), 228–232 (DTAGQ), and 292–295 (NKID). S-geranylgeranyl cysteine attachment occurs at residues C415 and C416.

This sequence belongs to the small GTPase superfamily. Rab family. As to quaternary structure, interacts with MYO2 (via C-terminal tail domain). Interacts with YIF1, YIP3, YIP4 and YIP5.

The protein localises to the endoplasmic reticulum membrane. It is found in the bud tip. It localises to the bud neck. In terms of biological role, involved in the positive control of both endoplasmic reticulum (ER) and mitochondrion inheritance during cell divison. Required for the MYO2-dependent retention of newly inherited mitochondria at the bud tip in developing daughter cells. The sequence is that of GTP-binding protein YPT11 (YPT11) from Saccharomyces cerevisiae (strain AWRI1631) (Baker's yeast).